Here is an 85-residue protein sequence, read N- to C-terminus: Cell division protein ZapA (85 aa).

Residues 60 to 85 (AVNVVHDYLKLKEQYEKLEIQLKEKE) adopt a coiled-coil conformation.

It belongs to the ZapA family. Type 2 subfamily. Homodimer. Interacts with FtsZ.

Its subcellular location is the cytoplasm. In terms of biological role, activator of cell division through the inhibition of FtsZ GTPase activity, therefore promoting FtsZ assembly into bundles of protofilaments necessary for the formation of the division Z ring. It is recruited early at mid-cell but it is not essential for cell division. In Bacillus pumilus (strain SAFR-032), this protein is Cell division protein ZapA.